Consider the following 281-residue polypeptide: Bifunctional protein FolD (281 aa).

Residues 165-167 (GRG), threonine 192, and valine 233 each bind NADP(+).

It belongs to the tetrahydrofolate dehydrogenase/cyclohydrolase family. Homodimer.

The enzyme catalyses (6R)-5,10-methylene-5,6,7,8-tetrahydrofolate + NADP(+) = (6R)-5,10-methenyltetrahydrofolate + NADPH. The catalysed reaction is (6R)-5,10-methenyltetrahydrofolate + H2O = (6R)-10-formyltetrahydrofolate + H(+). It functions in the pathway one-carbon metabolism; tetrahydrofolate interconversion. Functionally, catalyzes the oxidation of 5,10-methylenetetrahydrofolate to 5,10-methenyltetrahydrofolate and then the hydrolysis of 5,10-methenyltetrahydrofolate to 10-formyltetrahydrofolate. This Mycobacterium avium (strain 104) protein is Bifunctional protein FolD.